The chain runs to 376 residues: Outer membrane porin C (376 aa).

The N-terminal stretch at 1 to 21 (MKLRVLSLMVPALLVAGTAGA) is a signal peptide.

It belongs to the Gram-negative porin family. Homotrimer.

It is found in the cell outer membrane. Functionally, forms pores that allow passive diffusion of small molecules across the outer membrane. The polypeptide is Outer membrane porin C (ompC) (Serratia marcescens).